The following is a 504-amino-acid chain: Maturase K (504 aa).

The protein belongs to the intron maturase 2 family. MatK subfamily.

It localises to the plastid. The protein resides in the chloroplast. Usually encoded in the trnK tRNA gene intron. Probably assists in splicing its own and other chloroplast group II introns. This chain is Maturase K, found in Quercus gemelliflora (Pasang hiris).